Here is a 293-residue protein sequence, read N- to C-terminus: Phosphoribosylaminoimidazole-succinocarboxamide synthase (293 aa).

It belongs to the SAICAR synthetase family.

It catalyses the reaction 5-amino-1-(5-phospho-D-ribosyl)imidazole-4-carboxylate + L-aspartate + ATP = (2S)-2-[5-amino-1-(5-phospho-beta-D-ribosyl)imidazole-4-carboxamido]succinate + ADP + phosphate + 2 H(+). Its pathway is purine metabolism; IMP biosynthesis via de novo pathway; 5-amino-1-(5-phospho-D-ribosyl)imidazole-4-carboxamide from 5-amino-1-(5-phospho-D-ribosyl)imidazole-4-carboxylate: step 1/2. This Bordetella petrii (strain ATCC BAA-461 / DSM 12804 / CCUG 43448) protein is Phosphoribosylaminoimidazole-succinocarboxamide synthase.